The chain runs to 73 residues: Translation initiation factor IF-1 (73 aa).

The region spanning 1-72 (MAKEDHIEMA…SKGRIIFRDK (72 aa)) is the S1-like domain.

Belongs to the IF-1 family. As to quaternary structure, component of the 30S ribosomal translation pre-initiation complex which assembles on the 30S ribosome in the order IF-2 and IF-3, IF-1 and N-formylmethionyl-tRNA(fMet); mRNA recruitment can occur at any time during PIC assembly.

It localises to the cytoplasm. Functionally, one of the essential components for the initiation of protein synthesis. Stabilizes the binding of IF-2 and IF-3 on the 30S subunit to which N-formylmethionyl-tRNA(fMet) subsequently binds. Helps modulate mRNA selection, yielding the 30S pre-initiation complex (PIC). Upon addition of the 50S ribosomal subunit IF-1, IF-2 and IF-3 are released leaving the mature 70S translation initiation complex. In Legionella pneumophila (strain Paris), this protein is Translation initiation factor IF-1.